The primary structure comprises 345 residues: UDP-3-O-acylglucosamine N-acyltransferase (345 aa).

The active-site Proton acceptor is the H239.

Belongs to the transferase hexapeptide repeat family. LpxD subfamily. Homotrimer.

The catalysed reaction is a UDP-3-O-[(3R)-3-hydroxyacyl]-alpha-D-glucosamine + a (3R)-hydroxyacyl-[ACP] = a UDP-2-N,3-O-bis[(3R)-3-hydroxyacyl]-alpha-D-glucosamine + holo-[ACP] + H(+). It participates in bacterial outer membrane biogenesis; LPS lipid A biosynthesis. Its function is as follows. Catalyzes the N-acylation of UDP-3-O-acylglucosamine using 3-hydroxyacyl-ACP as the acyl donor. Is involved in the biosynthesis of lipid A, a phosphorylated glycolipid that anchors the lipopolysaccharide to the outer membrane of the cell. The sequence is that of UDP-3-O-acylglucosamine N-acyltransferase from Geobacter metallireducens (strain ATCC 53774 / DSM 7210 / GS-15).